The chain runs to 600 residues: Na(+)/dicarboxylate cotransporter 3 (600 aa).

Topologically, residues 1–16 are cytoplasmic; sequence MAALAALAKKVWSARR. A helical transmembrane segment spans residues 17 to 37; it reads LLVLLLVPLALLPILFALPPK. Topologically, residues 38–55 are extracellular; sequence EGRCLYVILLMAVYWCTE. A helical membrane pass occupies residues 56–76; the sequence is ALPLSVTALLPIILFPFMGIL. The Cytoplasmic segment spans residues 77–82; the sequence is PSSKVC. A helical membrane pass occupies residues 83–103; it reads PQYFLDTNFLFLSGLIMASAI. The Extracellular segment spans residues 104–137; sequence EEWNLHRRIALKVLMLVGVQPARLILGMMVTTSF. The helical transmembrane segment at 138 to 158 threads the bilayer; it reads LSMWLSNTASTAMMLPIASAI. Topologically, residues 159–229 are cytoplasmic; sequence LKSLFGQREA…KEEEHRRNIW (71 aa). Residues 230 to 250 traverse the membrane as a helical segment; it reads KGFLISIPYSASIGGTATLTG. The Extracellular portion of the chain corresponds to 251 to 278; that stretch reads TAPNLILLGQLKSFFPQCDVVNFGSWFI. A helical membrane pass occupies residues 279 to 299; the sequence is FAFPLMLLFLLVGWLWISFLY. Topologically, residues 300 to 336 are cytoplasmic; it reads GGMSWRSWRKKKSKIRADAEDQAKAVIQEEFQNLGPI. The helical transmembrane segment at 337 to 357 threads the bilayer; that stretch reads KFAEQAVFILFCTFAILLFSR. At 358–372 the chain is on the extracellular side; the sequence is DPKFIPGWASLFAPG. A helical membrane pass occupies residues 373-393; it reads FVSDAVTGVAIVTILFFFPSQ. The Cytoplasmic segment spans residues 394–422; that stretch reads KPSLKWWFDFKAPNSETEPLLSWKKAQET. Residues 423-443 constitute an intramembrane region (helical); sequence VPWNIILLLGGGFAMAKGCEE. Over 444 to 461 the chain is Cytoplasmic; sequence SGLSAWIGGQLHPLEHVP. The helical transmembrane segment at 462–482 threads the bilayer; sequence PLLAVLLITVVIAFFTEFASN. At 483 to 505 the chain is on the extracellular side; it reads TATIIIFLPVLAELAIRLHVHPL. A helical membrane pass occupies residues 506-526; the sequence is YLMIPGTVGCSYAFMLPVSTP. The Cytoplasmic segment spans residues 527-546; that stretch reads PNSIAFSTGHLLVKDMVRTG. Residues 547 to 567 traverse the membrane as a helical segment; it reads LLMNLMGVLLLSLAMNTWAQT. At 568–600 the chain is on the extracellular side; the sequence is IFQLGTFPDWANTHAANATALPPALTNNTVQTF. N-linked (GlcNAc...) asparagine glycans are attached at residues asparagine 584 and asparagine 594.

The protein belongs to the SLC13A/DASS transporter (TC 2.A.47) family. NADC subfamily. Highly expressed in kidney, and at much lower levels in brain.

The protein localises to the cell membrane. The enzyme catalyses succinate(out) + 3 Na(+)(out) = succinate(in) + 3 Na(+)(in). The catalysed reaction is 2-oxoglutarate(out) + 3 Na(+)(out) = 2-oxoglutarate(in) + 3 Na(+)(in). It catalyses the reaction N-acetyl-L-aspartate(out) + 3 Na(+)(out) = N-acetyl-L-aspartate(in) + 3 Na(+)(in). It carries out the reaction fumarate(out) + 3 Na(+)(out) = fumarate(in) + 3 Na(+)(in). The enzyme catalyses glutarate(out) + 3 Na(+)(out) = glutarate(in) + 3 Na(+)(in). The catalysed reaction is 2,2-dimethylsuccinate(out) + 3 Na(+)(out) = 2,2-dimethylsuccinate(in) + 3 Na(+)(in). It catalyses the reaction 2,3-dimethylsuccinate(out) + 3 Na(+)(out) = 2,3-dimethylsuccinate(in) + 3 Na(+)(in). It carries out the reaction malate(out) + 3 Na(+)(out) = malate(in) + 3 Na(+)(in). The enzyme catalyses itaconate(out) + 3 Na(+)(out) = itaconate(in) + 3 Na(+)(in). High-affinity sodium-dicarboxylate cotransporter that accepts a range of substrates with 4-6 carbon atoms, such as the citric acid cycle intermediates succinate and alpha-ketoglutarate (2-oxoglutarate), as well as other compounds including N-acetyl-L-aspartate. Transports the dicarboxylate into the cell with a probable stoichiometry of 3 Na(+) for 1 divalent dicarboxylate, rendering the process electrogenic. Can transport citrate in a Na(+)-dependent manner, recognizing the divalent form of citrate rather than the trivalent form which is normally found in blood. Imports itaconate in hepatocytes leading to activation of TFEB-dependent lysosomal biogenesis involved in antibacterial innate immune response. In Mus musculus (Mouse), this protein is Na(+)/dicarboxylate cotransporter 3 (Slc13a3).